We begin with the raw amino-acid sequence, 170 residues long: Shikimate kinase (170 aa).

ATP is bound at residue 11-16 (GAGKTT). Threonine 15 is a binding site for Mg(2+). Substrate-binding residues include aspartate 33, arginine 57, and glycine 80. ATP is bound at residue arginine 119. Arginine 141 contacts substrate.

Belongs to the shikimate kinase family. Monomer. It depends on Mg(2+) as a cofactor.

Its subcellular location is the cytoplasm. It catalyses the reaction shikimate + ATP = 3-phosphoshikimate + ADP + H(+). It functions in the pathway metabolic intermediate biosynthesis; chorismate biosynthesis; chorismate from D-erythrose 4-phosphate and phosphoenolpyruvate: step 5/7. Functionally, catalyzes the specific phosphorylation of the 3-hydroxyl group of shikimic acid using ATP as a cosubstrate. The polypeptide is Shikimate kinase (Azobacteroides pseudotrichonymphae genomovar. CFP2).